The primary structure comprises 643 residues: Transducer protein Htr8 (643 aa).

5 helical membrane-spanning segments follow: residues 48 to 68, 79 to 99, 115 to 134, 149 to 169, and 184 to 204; these read VFVLAHIPLLLALGLYEGTES, PGILIAAELGIVGALVGLASI, VLASSVVLVQFSGGFIEAHF, WLPFALGLVYVVFTHGVFGMI, and PWVWGGIHGAFVLLLAGALMA. Residues 273 to 326 enclose the HAMP domain; it reads ERLEATANTYGAAMARAADGDLSVRLDPDVENDAMAAIAASFNEMLDETETTIR. One can recognise a Methyl-accepting transducer domain in the interval 345–581; it reads GVVEIEDASG…EAVSMIAEVS (237 aa).

This sequence belongs to the methyl-accepting chemotaxis (MCP) protein family. Methylated by CheR.

It localises to the cell membrane. Potentially involved in chemo- or phototactic signal transduction. This chain is Transducer protein Htr8 (htr8), found in Halobacterium salinarum (strain ATCC 29341 / DSM 671 / R1).